A 622-amino-acid chain; its full sequence is UvrABC system protein C (622 aa).

A GIY-YIG domain is found at Glu13–Ile92. A UVR domain is found at Lys204–Ile239.

Belongs to the UvrC family. As to quaternary structure, interacts with UvrB in an incision complex.

It localises to the cytoplasm. Its function is as follows. The UvrABC repair system catalyzes the recognition and processing of DNA lesions. UvrC both incises the 5' and 3' sides of the lesion. The N-terminal half is responsible for the 3' incision and the C-terminal half is responsible for the 5' incision. The polypeptide is UvrABC system protein C (Clostridium tetani (strain Massachusetts / E88)).